The following is a 561-amino-acid chain: (+)-alpha-pinene synthase TPS2FN (561 aa).

5 residues coordinate (2E)-geranyl diphosphate: Arg-276, Asp-313, Asp-317, Arg-455, and Asp-458. The Mg(2+) site is built by Asp-313 and Asp-317. The DDXXD motif signature appears at 313-317 (DDIYD). Mg(2+) contacts are provided by Asp-458, Thr-462, and Glu-466.

This sequence belongs to the terpene synthase family. Tpsb subfamily. Mg(2+) is required as a cofactor. It depends on Mn(2+) as a cofactor. As to expression, expressed in glandular trichomes two to four weeks after flowering onset.

The enzyme catalyses (2E)-geranyl diphosphate = (1R,5R)-alpha-pinene + diphosphate. The catalysed reaction is (2E)-geranyl diphosphate = (4S)-limonene + diphosphate. It carries out the reaction (2E)-geranyl diphosphate = sabinene + diphosphate. It catalyses the reaction (2E)-geranyl diphosphate = beta-phellandrene + diphosphate. The enzyme catalyses (2E)-geranyl diphosphate = camphene + diphosphate. The catalysed reaction is (2E)-geranyl diphosphate = isoterpinolene + diphosphate. It participates in secondary metabolite biosynthesis; terpenoid biosynthesis. Its pathway is terpene metabolism; (-)-alpha-pinene biosynthesis; (-)-alpha-pinene from geranyl diphosphate: step 1/1. Its function is as follows. Involved in monoterpene (C10) olefins biosynthesis, constituants of cannabinoids and terpenoids-rich resins. Catalyzes mainly the conversion of (2E)-geranyl diphosphate to (+)-alpha-pinene, and also produces minor products such as camphene, sabinene, beta-phellandrene, (-)-limonene and isoterpinolene. This is (+)-alpha-pinene synthase TPS2FN from Cannabis sativa (Hemp).